A 251-amino-acid chain; its full sequence is Small ribosomal subunit protein uS2 (251 aa).

Belongs to the universal ribosomal protein uS2 family.

In Chlorobium chlorochromatii (strain CaD3), this protein is Small ribosomal subunit protein uS2.